The sequence spans 137 residues: Ribosome-binding factor A (137 aa).

The protein belongs to the RbfA family. As to quaternary structure, monomer. Binds 30S ribosomal subunits, but not 50S ribosomal subunits or 70S ribosomes.

It localises to the cytoplasm. Functionally, one of several proteins that assist in the late maturation steps of the functional core of the 30S ribosomal subunit. Associates with free 30S ribosomal subunits (but not with 30S subunits that are part of 70S ribosomes or polysomes). Required for efficient processing of 16S rRNA. May interact with the 5'-terminal helix region of 16S rRNA. This Rhodopseudomonas palustris (strain TIE-1) protein is Ribosome-binding factor A.